A 338-amino-acid chain; its full sequence is UDP-glucose 4-epimerase (338 aa).

NAD(+) is bound by residues 11 to 12, 31 to 36, 58 to 59, 80 to 84, Asn99, Ser124, Tyr149, Lys153, and Phe178; these read FI, DNLCNS, DI, and FAGLK. 2 residues coordinate substrate: Ser124 and Tyr149. Tyr149 functions as the Proton acceptor in the catalytic mechanism. Substrate is bound by residues Asn179, 199–200, 216–218, Arg231, and 292–295; these read NL, SVF, and RAGD.

It belongs to the NAD(P)-dependent epimerase/dehydratase family. In terms of assembly, homodimer. NAD(+) is required as a cofactor.

The enzyme catalyses UDP-alpha-D-glucose = UDP-alpha-D-galactose. It functions in the pathway carbohydrate metabolism; galactose metabolism. Its function is as follows. Involved in the metabolism of galactose. Plays an essential role in the incorporation of galactose into meningococcal lipopolysaccharide surface molecules, which are important for pathogenesis. Catalyzes the conversion of UDP-galactose (UDP-Gal) to UDP-glucose (UDP-Glc) through a mechanism involving the transient reduction of NAD. This is UDP-glucose 4-epimerase (galE) from Neisseria gonorrhoeae.